We begin with the raw amino-acid sequence, 191 residues long: MKDEHNQKHDHLSQKEPESYQKACACKEQQDEEMQEAGEKEGEIKEDFELKYKEMHEKYLRVHADFENVKKRLERDKSMALEYAYEKIALDLLPVIDALLGAHKSAAEENKESALTKGLELTMEKLHEVLARHGIEGIECLEEFDPNFHNAIMQVKSEEKENGKIVQVLQQGYKYKGRVLRPAMVSIAKND.

Positions 1–19 are enriched in basic and acidic residues; sequence MKDEHNQKHDHLSQKEPES. Residues 1–44 form a disordered region; sequence MKDEHNQKHDHLSQKEPESYQKACACKEQQDEEMQEAGEKEGEI.

This sequence belongs to the GrpE family. Homodimer.

It is found in the cytoplasm. In terms of biological role, participates actively in the response to hyperosmotic and heat shock by preventing the aggregation of stress-denatured proteins, in association with DnaK and GrpE. It is the nucleotide exchange factor for DnaK and may function as a thermosensor. Unfolded proteins bind initially to DnaJ; upon interaction with the DnaJ-bound protein, DnaK hydrolyzes its bound ATP, resulting in the formation of a stable complex. GrpE releases ADP from DnaK; ATP binding to DnaK triggers the release of the substrate protein, thus completing the reaction cycle. Several rounds of ATP-dependent interactions between DnaJ, DnaK and GrpE are required for fully efficient folding. The protein is Protein GrpE of Helicobacter pylori (strain G27).